Reading from the N-terminus, the 937-residue chain is Outer membrane usher protein CS3-2 (937 aa).

Belongs to the fimbrial export usher family. In terms of processing, a 97 kDa form of the protein is thought to be due to post-translational processing of isoform 104 kDa.

The protein resides in the cell outer membrane. In terms of biological role, these proteins are essential for the biogenesis of mature CS3 pili, but not for synthesis of the CS3 pilin subunit. The polypeptide is Outer membrane usher protein CS3-2 (Escherichia coli).